An 892-amino-acid polypeptide reads, in one-letter code: Dipeptidyl peptidase 8 (892 aa).

Residues serine 749, aspartate 827, and histidine 859 each act as charge relay system in the active site.

This sequence belongs to the peptidase S9B family. DPPIV subfamily. Homodimer. Forms a ternary complex with NLRP1, composed of a DPP8 homodimer, one full-length NLRP1 protein, and one cleaved C-terminus of NLRP1 (NACHT, LRR and PYD domains-containing protein 1, C-terminus). Forms a ternary complex with CARD8, composed of a DPP8 homodimer, one full-length NLRP1 protein, and one cleaved C-terminus of CARD8 (Caspase recruitment domain-containing protein 8, C-terminus). In the ternary complex, only one subunit of the DPP8 homodimer is bound to NLRP1 or CARD8.

It localises to the cytoplasm. It catalyses the reaction Release of an N-terminal dipeptide, Xaa-Yaa-|-Zaa-, from a polypeptide, preferentially when Yaa is Pro, provided Zaa is neither Pro nor hydroxyproline.. With respect to regulation, inhibited by zinc. Inhibited by the serine proteinase inhibitor 4-(2-aminoethyl)benzenesulphonyl fluoride (AEBSF), and by di-isopropylfluorophosphate. Specifically inhibited by isoindoline derivatives. Inhibited by Val-boroPro (Talabostat, PT-100), a non-selective inhibitor, which triggers pyroptosis in monocytes and macrophages. In terms of biological role, dipeptidyl peptidase that cleaves off N-terminal dipeptides from proteins having a Pro or Ala residue at position 2. Acts as a key inhibitor of caspase-1-dependent monocyte and macrophage pyroptosis in resting cells by preventing activation of NLRP1 and CARD8. Sequesters the cleaved C-terminal part of NLRP1 and CARD8, which respectively constitute the active part of the NLRP1 and CARD8 inflammasomes, in a ternary complex, thereby preventing their oligomerization and activation. The dipeptidyl peptidase activity is required to suppress NLRP1 and CARD8; however, neither NLRP1 nor CARD8 are bona fide substrates of DPP8, suggesting the existence of substrate(s) required for NLRP1 and CARD8 inhibition. In Mus musculus (Mouse), this protein is Dipeptidyl peptidase 8.